Reading from the N-terminus, the 53-residue chain is Ovomucoid (53 aa).

In terms of domain architecture, Kazal-like spans 3–53; the sequence is VDCSEYPQPTCTTEHRPVCGSNNETYGNKCNFCNAVVKSNGTLTVSHFGKC. 3 disulfides stabilise this stretch: Cys5–Cys35, Cys13–Cys32, and Cys21–Cys53. The N-linked (GlcNAc...) asparagine glycan is linked to Asn42.

The protein localises to the secreted. This is Ovomucoid from Polyplectron bicalcaratum (Grey peacock-pheasant).